The primary structure comprises 149 residues: Flagellar assembly factor FliW (149 aa).

Belongs to the FliW family. In terms of assembly, interacts with translational regulator CsrA and flagellin(s).

Its subcellular location is the cytoplasm. Its function is as follows. Acts as an anti-CsrA protein, binds CsrA and prevents it from repressing translation of its target genes, one of which is flagellin. Binds to flagellin and participates in the assembly of the flagellum. The chain is Flagellar assembly factor FliW from Thermotoga petrophila (strain ATCC BAA-488 / DSM 13995 / JCM 10881 / RKU-1).